Reading from the N-terminus, the 547-residue chain is Glucose-6-phosphate isomerase 2 (547 aa).

E351 functions as the Proton donor in the catalytic mechanism. Active-site residues include H382 and K508.

The protein belongs to the GPI family.

It is found in the cytoplasm. It carries out the reaction alpha-D-glucose 6-phosphate = beta-D-fructose 6-phosphate. It participates in carbohydrate biosynthesis; gluconeogenesis. It functions in the pathway carbohydrate degradation; glycolysis; D-glyceraldehyde 3-phosphate and glycerone phosphate from D-glucose: step 2/4. Functionally, catalyzes the reversible isomerization of glucose-6-phosphate to fructose-6-phosphate. The polypeptide is Glucose-6-phosphate isomerase 2 (Neisseria meningitidis serogroup B (strain ATCC BAA-335 / MC58)).